We begin with the raw amino-acid sequence, 329 residues long: Probable nicotianamine synthase 7 (329 aa).

This sequence belongs to the nicotianamine synthase (NAS)-like family.

It catalyses the reaction 3 S-adenosyl-L-methionine = nicotianamine + 3 S-methyl-5'-thioadenosine + 3 H(+). Synthesizes nicotianamine, a polyamine that is the first intermediate in the synthesis of the phytosiderophores of the mugineic acid type found in gramineae which serves as a sensor for the physiological iron status within the plant, and/or might be involved in the transport of iron. This Hordeum vulgare (Barley) protein is Probable nicotianamine synthase 7 (NAS7).